Consider the following 124-residue polypeptide: NADH-quinone oxidoreductase subunit K (124 aa).

The next 3 membrane-spanning stretches (helical) occupy residues 28-48 (MEHGLILAAIIFAIGLCGVMV), 52-72 (FLFMLMSLEIMMSAAGLAFIV), and 84-104 (IMFIFILTLAAAEASLGLAIL).

The protein belongs to the complex I subunit 4L family. In terms of assembly, NDH-1 is composed of 14 different subunits. Subunits NuoA, H, J, K, L, M, N constitute the membrane sector of the complex.

The protein localises to the cell inner membrane. The enzyme catalyses a quinone + NADH + 5 H(+)(in) = a quinol + NAD(+) + 4 H(+)(out). Functionally, NDH-1 shuttles electrons from NADH, via FMN and iron-sulfur (Fe-S) centers, to quinones in the respiratory chain. The immediate electron acceptor for the enzyme in this species is believed to be ubiquinone. Couples the redox reaction to proton translocation (for every two electrons transferred, four hydrogen ions are translocated across the cytoplasmic membrane), and thus conserves the redox energy in a proton gradient. This is NADH-quinone oxidoreductase subunit K from Psychrobacter sp. (strain PRwf-1).